Here is an 804-residue protein sequence, read N- to C-terminus: MDSSTKTLTEDKQVYRVEGFSCANCAGKFEKNVKELSGVHDAKVNFGASKIDVFGSATVEDLEKAGAFENLKVAPEKARRRVEPVVTEDKNVYRVEGFSCANCAGKFEKNVKQLAGVQDAKVNFGASKIDVYGNASVEELEKAGAFENLKVIPEKLANPSIQAVKEDTKAPKEEKIPFYKKHSTLLFATLLIAFGYLSHFVNGEDNLVTSMLFVSSIVIGGYSLFKVGFQNLIRFDFDMKTLMTVAVIGAAIIGEWAEASIVVILFAISEALERFSMDRARQSIRSLMDIAPKEALVRRNGQEIMIHVDDIAVGDIMIVKPGEKIAMDGIIINGVSAVNQAAITGESVPVAKTVDDEVFAGTLNEEGLLEVKITKYVEDTTISKIIHLVEEAQGERAPAQAFVDKFAKYYTPIIMVIAALVAVVPPLFFGGSWDTWVYQGLAVLVVGCPCALVITTPISIVSAIGNAAKKGVLIKGGVYLEELGAIKAIAFDKTGTLTKGVPVVTDFKVLNDQVEEKELFSIITALEYRSQHPLASAIMKKAEQDNITYSDVRVKDFTSITGRGIQGNIDGTTYYIGSPRLFKELNVSDFSLEFENKVKVLQNQGKTAMIIGTDQTILGVIAVADEVRETSKNVILKLHQLGIKQTIMLTGDNQGTAEAIGAHVGVSDIQSELLPQDKLDYIKKMKAEHGNVAMIGDGVNDAPALAASTVGIAMGGAGTDTAIETADIALMGDDLSKLPFAVRLSRKTLNIIKANITFAIGIKIIALLLVIPGWLTLWIAILSDMGATILVALNSLRLMRVKDK.

2 consecutive HMA domains span residues 11 to 74 (DKQV…LKVA) and 89 to 152 (DKNV…LKVI). Cysteine 22, cysteine 25, cysteine 100, and cysteine 103 together coordinate Cd(2+). 5 consecutive transmembrane segments (helical) span residues 183–203 (STLL…FVNG), 207–227 (LVTS…LFKV), 248–268 (IGAA…LFAI), 413–433 (IIMV…GGSW), and 441–461 (LAVL…ISIV). The 4-aspartylphosphate intermediate role is filled by aspartate 492. Helical transmembrane passes span 749-771 (LNII…LLVI) and 776-798 (TLWI…SLRL).

Belongs to the cation transport ATPase (P-type) (TC 3.A.3) family. Type IB subfamily.

Its subcellular location is the cell membrane. It catalyses the reaction Cd(2+)(in) + ATP + H2O = Cd(2+)(out) + ADP + phosphate + H(+). Functionally, couples the hydrolysis of ATP with the export of cadmium. Involved in cadmium resistance. The chain is Probable cadmium-transporting ATPase (cadA) from Staphylococcus aureus.